The following is a 21-amino-acid chain: Cytoplasmic filament protein A (21 aa).

The tract at residues Ala-1–Gly-21 is disordered.

It localises to the cytoplasm. Component of the cytoplasmic filaments that run the length of the organism just underneath the cytoplasmic membrane. The sequence is that of Cytoplasmic filament protein A (cfpA) from Treponema phagedenis.